A 568-amino-acid polypeptide reads, in one-letter code: Glucose-6-phosphate isomerase, cytosolic 1 (568 aa).

Glu-360 serves as the catalytic Proton donor. Catalysis depends on residues His-391 and Lys-516.

The protein belongs to the GPI family. Homodimer.

It localises to the cytoplasm. It carries out the reaction alpha-D-glucose 6-phosphate = beta-D-fructose 6-phosphate. It functions in the pathway carbohydrate degradation; glycolysis; D-glyceraldehyde 3-phosphate and glycerone phosphate from D-glucose: step 2/4. The protein is Glucose-6-phosphate isomerase, cytosolic 1 (PGIC1) of Clarkia xantiana (Gunsight clarkia).